Consider the following 230-residue polypeptide: Thymidylate kinase (230 aa).

20–27 (GGEGAGKS) provides a ligand contact to ATP.

Belongs to the thymidylate kinase family.

It carries out the reaction dTMP + ATP = dTDP + ADP. Functionally, phosphorylation of dTMP to form dTDP in both de novo and salvage pathways of dTTP synthesis. This is Thymidylate kinase from Rhodopseudomonas palustris (strain ATCC BAA-98 / CGA009).